Here is a 1133-residue protein sequence, read N- to C-terminus: DNA-directed RNA polymerase III subunit RPC2 (1133 aa).

Lys-186 contacts RNA. Position 195 (Arg-195) interacts with DNA. RNA is bound at residue Arg-213. Asp-432 is a binding site for DNA. RNA-binding residues include Gln-438 and Gln-692. Asp-753 contributes to the Mg(2+) binding site. Residues Lys-896, Lys-904, and Lys-1019 each contribute to the RNA site. Positions 1039, 1040, and 1046 each coordinate DNA. The Zn(2+) site is built by Cys-1080, Cys-1083, Cys-1092, and Cys-1095. The segment at 1080-1095 (CGQCGLLGYSGWCHYC) adopts a C4-type zinc-finger fold.

This sequence belongs to the RNA polymerase beta chain family. As to quaternary structure, component of the RNA polymerase III (Pol III) complex consisting of 17 subunits: a ten-subunit catalytic core composed of POLR3A/RPC1, POLR3B/RPC2, POLR1C/RPAC1, POLR1D/RPAC2, POLR3K/RPC10, POLR2E/RPABC1, POLR2F/RPABC2, POLR2H/RPABC3, POLR2K/RPABC4 and POLR2L/RPABC5; a mobile stalk composed of two subunits POLR3H/RPC8 and CRCP/RPC9, protruding from the core and functioning primarily in transcription initiation; and additional subunits homologous to general transcription factors of the RNA polymerase II machinery, POLR3C/RPC3-POLR3F/RPC6-POLR3G/RPC7 heterotrimer required for transcription initiation and POLR3D/RPC4-POLR3E/RPC5 heterodimer involved in both transcription initiation and termination. The cofactor is Mg(2+).

The protein resides in the nucleus. The protein localises to the cytoplasm. Its subcellular location is the cytosol. The catalysed reaction is RNA(n) + a ribonucleoside 5'-triphosphate = RNA(n+1) + diphosphate. Functionally, catalytic core component of RNA polymerase III (Pol III), a DNA-dependent RNA polymerase which synthesizes small non-coding RNAs using the four ribonucleoside triphosphates as substrates. Synthesizes 5S rRNA, snRNAs, tRNAs and miRNAs from at least 500 distinct genomic loci. Pol III-mediated transcription cycle proceeds through transcription initiation, transcription elongation and transcription termination stages. During transcription initiation, Pol III is recruited to DNA promoters type I, II or III with the help of general transcription factors and other specific initiation factors. Once the polymerase has escaped from the promoter it enters the elongation phase during which RNA is actively polymerized, based on complementarity with the template DNA strand. Transcription termination involves the release of the RNA transcript and polymerase from the DNA. Forms Pol III active center together with the largest subunit POLR3A/RPC1. A single-stranded DNA template strand of the promoter is positioned within the central active site cleft of Pol III. Appends one nucleotide at a time to the 3' end of the nascent RNA, with POLR3A/RPC1 contributing a Mg(2+)-coordinating DxDGD motif, and POLR3B/RPC2 participating in the coordination of a second Mg(2+) ion and providing lysine residues believed to facilitate Watson-Crick base pairing between the incoming nucleotide and template base. Typically, Mg(2+) ions direct a 5' nucleoside triphosphate to form a phosphodiester bond with the 3' hydroxyl of the preceding nucleotide of the nascent RNA, with the elimination of pyrophosphate. Pol III plays a key role in sensing and limiting infection by intracellular bacteria and DNA viruses. Acts as a nuclear and cytosolic DNA sensor involved in innate immune response. Can sense non-self dsDNA that serves as template for transcription into dsRNA. The non-self RNA polymerase III transcripts, such as Epstein-Barr virus-encoded RNAs (EBERs) induce type I interferon and NF-kappa-B through the RIG-I pathway. The protein is DNA-directed RNA polymerase III subunit RPC2 of Homo sapiens (Human).